Consider the following 442-residue polypeptide: Proline--tRNA ligase (442 aa).

This sequence belongs to the class-II aminoacyl-tRNA synthetase family. ProS type 2 subfamily. As to quaternary structure, homodimer.

The protein resides in the cytoplasm. It catalyses the reaction tRNA(Pro) + L-proline + ATP = L-prolyl-tRNA(Pro) + AMP + diphosphate. Its function is as follows. Catalyzes the attachment of proline to tRNA(Pro) in a two-step reaction: proline is first activated by ATP to form Pro-AMP and then transferred to the acceptor end of tRNA(Pro). The chain is Proline--tRNA ligase from Sinorhizobium medicae (strain WSM419) (Ensifer medicae).